Here is a 156-residue protein sequence, read N- to C-terminus: Putative pre-16S rRNA nuclease (156 aa).

Belongs to the YqgF nuclease family.

Its subcellular location is the cytoplasm. In terms of biological role, could be a nuclease involved in processing of the 5'-end of pre-16S rRNA. The sequence is that of Putative pre-16S rRNA nuclease from Phenylobacterium zucineum (strain HLK1).